A 282-amino-acid chain; its full sequence is MLARSALFVHSAELAANAARAASGAAAAQPKKTGNRIKTFEIYRFNPEAPGAKPTIQKFDVDLDQCGTMILDALIKIKNEVDPTLTFRRSCREGICGSCAMNIGGENTLACICKIDADTSKSTKIYPLPHMFVVKDLVPDMNLFYAQYASIQPWIQKKTPLTLGEKQMHQSVAERDRLDGLYECILCACCSTSCPSYWWNADKYLGPAVLMQAYRWVIDSRDDYAQERLHRMHDSFSAFKCHTIMNCTKTCPKHLNPAKAIGEIKSLLTGFKSKPAAEPSAF.

One can recognise a 2Fe-2S ferredoxin-type domain in the interval 43–131; the sequence is YRFNPEAPGA…STKIYPLPHM (89 aa). Residues cysteine 91, cysteine 96, cysteine 99, and cysteine 111 each contribute to the [2Fe-2S] cluster site. Positions 174-204 constitute a 4Fe-4S ferredoxin-type domain; sequence ERDRLDGLYECILCACCSTSCPSYWWNADKY. The [4Fe-4S] cluster site is built by cysteine 184, cysteine 187, and cysteine 190. Residue cysteine 194 coordinates [3Fe-4S] cluster. Residue tryptophan 199 participates in a ubiquinone binding. [3Fe-4S] cluster contacts are provided by cysteine 241 and cysteine 247. Cysteine 251 serves as a coordination point for [4Fe-4S] cluster.

It belongs to the succinate dehydrogenase/fumarate reductase iron-sulfur protein family. Component of complex II composed of four subunits: a flavoprotein (FP), an iron-sulfur protein (IP), and a cytochrome b composed of a large and a small subunit. [2Fe-2S] cluster is required as a cofactor. It depends on [3Fe-4S] cluster as a cofactor. The cofactor is [4Fe-4S] cluster.

It localises to the mitochondrion inner membrane. The enzyme catalyses a quinone + succinate = fumarate + a quinol. It functions in the pathway carbohydrate metabolism; tricarboxylic acid cycle; fumarate from succinate (eukaryal route): step 1/1. In terms of biological role, iron-sulfur protein (IP) subunit of succinate dehydrogenase (SDH) that is involved in complex II of the mitochondrial electron transport chain and is responsible for transferring electrons from succinate to ubiquinone (coenzyme Q). The chain is Succinate dehydrogenase [ubiquinone] iron-sulfur subunit, mitochondrial from Caenorhabditis briggsae.